A 331-amino-acid polypeptide reads, in one-letter code: Anthranilate phosphoribosyltransferase (331 aa).

5-phospho-alpha-D-ribose 1-diphosphate-binding positions include Gly-78, 81–82, Ser-86, 88–91, 106–114, and Ser-118; these read GD, NIST, and KHGNKSITS. Anthranilate is bound at residue Gly-78. Mg(2+) is bound at residue Ser-90. Residue Asn-109 coordinates anthranilate. Arg-163 provides a ligand contact to anthranilate. Mg(2+) contacts are provided by Asp-222 and Glu-223.

Belongs to the anthranilate phosphoribosyltransferase family. Homodimer. It depends on Mg(2+) as a cofactor.

The catalysed reaction is N-(5-phospho-beta-D-ribosyl)anthranilate + diphosphate = 5-phospho-alpha-D-ribose 1-diphosphate + anthranilate. It functions in the pathway amino-acid biosynthesis; L-tryptophan biosynthesis; L-tryptophan from chorismate: step 2/5. Its function is as follows. Catalyzes the transfer of the phosphoribosyl group of 5-phosphorylribose-1-pyrophosphate (PRPP) to anthranilate to yield N-(5'-phosphoribosyl)-anthranilate (PRA). This Staphylococcus epidermidis (strain ATCC 35984 / DSM 28319 / BCRC 17069 / CCUG 31568 / BM 3577 / RP62A) protein is Anthranilate phosphoribosyltransferase.